A 370-amino-acid polypeptide reads, in one-letter code: Putative replication factor C small subunit L478 (370 aa).

41–48 provides a ligand contact to ATP; the sequence is GPSGSGKK. A compositionally biased stretch (basic and acidic residues) spans 342-353; the sequence is RNKEPEKSEKTK. A disordered region spans residues 342-370; it reads RNKEPEKSEKTKSKTGKLSRTNSKKTIKN. Basic residues predominate over residues 354 to 370; the sequence is SKTGKLSRTNSKKTIKN.

The protein belongs to the activator 1 small subunits family. RfcS subfamily.

In terms of biological role, part of the RFC clamp loader complex which loads the PCNA sliding clamp onto DNA. This chain is Putative replication factor C small subunit L478, found in Acanthamoeba polyphaga (Amoeba).